A 609-amino-acid chain; its full sequence is GDP-Man:Man(3)GlcNAc(2)-PP-Dol alpha-1,2-mannosyltransferase (609 aa).

Met-1 is a topological domain (lumenal). A helical transmembrane segment spans residues 2–22; sequence YLILLVVLAVYVTYKLITTVL. Over 23–195 the chain is Cytoplasmic; sequence PHHLLIPSQN…NLIDGNYWKH (173 aa). An intramembrane region (helical) is located at residues 196–216; sequence FTLIGQLFGGILLSLEAMYEL. Residues 217–455 lie on the Cytoplasmic side of the membrane; the sequence is SPDVWIDTMG…FGLNAMWNEH (239 aa). The helical intramembrane region spans 456 to 476; that stretch reads FGIGVVEYMARGCTPIVHASA. Topologically, residues 477-609 are cytoplasmic; it reads GPLLDMIGRN…EKRTKVEQVY (133 aa).

The protein belongs to the glycosyltransferase group 1 family.

The protein localises to the endoplasmic reticulum membrane. It carries out the reaction an alpha-D-Man-(1-&gt;3)-[alpha-D-Man-(1-&gt;6)]-beta-D-Man-(1-&gt;4)-beta-D-GlcNAc-(1-&gt;4)-alpha-D-GlcNAc-diphospho-di-trans,poly-cis-dolichol + 2 GDP-alpha-D-mannose = an alpha-D-Man-(1-&gt;2)-alpha-D-Man-(1-&gt;2)-alpha-D-Man-(1-&gt;3)-[alpha-D-Man-(1-&gt;6)]-beta-D-Man-(1-&gt;4)-beta-D-GlcNAc-(1-&gt;4)-alpha-D-GlcNAc-diphospho-di-trans,poly-cis-dolichol + 2 GDP + 2 H(+). It functions in the pathway protein modification; protein glycosylation. GDP-Man:Man(3)GlcNAc(2)-PP-Dol alpha-1,2-mannosyltransferase that operates in the biosynthetic pathway of dolichol-linked oligosaccharides, the glycan precursors employed in protein asparagine (N)-glycosylation. The assembly of dolichol-linked oligosaccharides begins on the cytosolic side of the endoplasmic reticulum membrane and finishes in its lumen. The sequential addition of sugars to dolichol pyrophosphate produces dolichol-linked oligosaccharides containing fourteen sugars, including two GlcNAcs, nine mannoses and three glucoses. Once assembled, the oligosaccharide is transferred from the lipid to nascent proteins by oligosaccharyltransferases. Catalyzes, on the cytoplasmic face of the endoplasmic reticulum, the addition of the fourth and fifth mannose residues to the dolichol-linked oligosaccharide chain, to produce Man(5)GlcNAc(2)-PP-dolichol core oligosaccharide. This Candida albicans (strain SC5314 / ATCC MYA-2876) (Yeast) protein is GDP-Man:Man(3)GlcNAc(2)-PP-Dol alpha-1,2-mannosyltransferase (ALG11).